The sequence spans 370 residues: uncharacterized protein (370 aa).

This is an uncharacterized protein from Caenorhabditis elegans.